Reading from the N-terminus, the 229-residue chain is Non-structural protein V (229 aa).

Composition is skewed to polar residues over residues 30–46 (ATSQSSLNKPPSQSSRT) and 82–112 (GRQNLDSLSMISNKPQTGTLLMGSDTQLPSP). Positions 30 to 112 (ATSQSSLNKP…MGSDTQLPSP (83 aa)) are disordered. Histidine 178, cysteine 197, cysteine 201, cysteine 213, cysteine 215, cysteine 218, cysteine 222, and cysteine 225 together coordinate Zn(2+).

The protein belongs to the paramyxoviruses V protein family.

Its function is as follows. Blocks host interferon signaling. In Homo sapiens (Human), this protein is Non-structural protein V (P/V).